An 87-amino-acid chain; its full sequence is Small ribosomal subunit protein bS21m (87 aa).

This sequence belongs to the bacterial ribosomal protein bS21 family. As to quaternary structure, component of the mitochondrial ribosome small subunit (28S) which comprises a 12S rRNA and about 30 distinct proteins.

The protein resides in the mitochondrion. The polypeptide is Small ribosomal subunit protein bS21m (Mrps21) (Mus musculus (Mouse)).